We begin with the raw amino-acid sequence, 381 residues long: Alpha-methylacyl-CoA racemase (381 aa).

Residues Arg-36 and 54–57 each bind substrate; that span reads LDLK. Lys-57 carries the N6-acetyllysine modification. N6-acetyllysine; alternate occurs at positions 86 and 100. Lys-86 and Lys-100 each carry N6-succinyllysine; alternate. An N6-acetyllysine modification is found at Lys-117. Residue 120–125 participates in substrate binding; the sequence is GHDINY. Catalysis depends on His-121, which acts as the Proton acceptor. Asp-151 (proton donor) is an active-site residue. Lys-267 carries the N6-succinyllysine modification. The tract at residues 316–344 is disordered; sequence TDGEQLPSPRPAPLLSRTPAVPSAKRDPS. The Microbody targeting signal motif lies at 379–381; it reads ANL.

This sequence belongs to the CoA-transferase III family. As to quaternary structure, monomer.

It is found in the peroxisome. Its subcellular location is the mitochondrion. It catalyses the reaction a (2S)-2-methylacyl-CoA = a (2R)-2-methylacyl-CoA. The enzyme catalyses (25R)-3alpha,7alpha,12alpha-trihydroxy-5beta-cholestan-26-oyl-CoA = (25S)-3alpha,7alpha,12alpha-trihydroxy-5beta-cholestan-26-oyl-CoA. It carries out the reaction (2R,6)-dimethylheptanoyl-CoA = (2S,6)-dimethylheptanoyl-CoA. The protein operates within lipid metabolism; bile acid biosynthesis. Its pathway is lipid metabolism; fatty acid metabolism. Catalyzes the interconversion of (R)- and (S)-stereoisomers of alpha-methyl-branched-chain fatty acyl-CoA esters. Acts only on coenzyme A thioesters, not on free fatty acids, and accepts as substrates a wide range of alpha-methylacyl-CoAs, including pristanoyl-CoA, trihydroxycoprostanoyl-CoA (an intermediate in bile acid synthesis), and arylpropionic acids like the anti-inflammatory drug ibuprofen (2-(4-isobutylphenyl)propionic acid) but neither 3-methyl-branched nor linear-chain acyl-CoAs. The chain is Alpha-methylacyl-CoA racemase (Amacr) from Mus musculus (Mouse).